A 558-amino-acid polypeptide reads, in one-letter code: uncharacterized protein (558 aa).

Residues Ser7–Ser206 enclose the DhaL domain.

This is an uncharacterized protein from Mycoplasma pneumoniae (strain ATCC 29342 / M129 / Subtype 1) (Mycoplasmoides pneumoniae).